A 708-amino-acid polypeptide reads, in one-letter code: Ion-translocating oxidoreductase complex subunit C (708 aa).

4Fe-4S ferredoxin-type domains are found at residues 369–397 and 407–436; these read GEPQ…QQLY and KATT…VQYF. C377, C380, C383, C387, C416, C419, C422, and C426 together coordinate [4Fe-4S] cluster. Positions 630 to 682 are disordered; the sequence is AKARKLEQQQANAEPEEQIDPRKAAVEAAIARAKARKLEQQQANAEPEEQIDP.

It belongs to the 4Fe4S bacterial-type ferredoxin family. RnfC subfamily. In terms of assembly, the complex is composed of six subunits: RsxA, RsxB, RsxC, RsxD, RsxE and RsxG. [4Fe-4S] cluster is required as a cofactor.

Its subcellular location is the cell inner membrane. Its function is as follows. Part of a membrane-bound complex that couples electron transfer with translocation of ions across the membrane. Required to maintain the reduced state of SoxR. The sequence is that of Ion-translocating oxidoreductase complex subunit C from Escherichia coli O1:K1 / APEC.